A 602-amino-acid polypeptide reads, in one-letter code: NADH-quinone oxidoreductase subunit C/D (602 aa).

The NADH dehydrogenase I subunit C stretch occupies residues 1-192 (MVNNMTDLTA…DPFELTKAKQ (192 aa)). The tract at residues 216–602 (DFMFLNLGPN…IDFVMSDVDR (387 aa)) is NADH dehydrogenase I subunit D.

It in the N-terminal section; belongs to the complex I 30 kDa subunit family. The protein in the C-terminal section; belongs to the complex I 49 kDa subunit family. NDH-1 is composed of 13 different subunits. Subunits NuoB, CD, E, F, and G constitute the peripheral sector of the complex.

Its subcellular location is the cell inner membrane. The enzyme catalyses a quinone + NADH + 5 H(+)(in) = a quinol + NAD(+) + 4 H(+)(out). Functionally, NDH-1 shuttles electrons from NADH, via FMN and iron-sulfur (Fe-S) centers, to quinones in the respiratory chain. The immediate electron acceptor for the enzyme in this species is believed to be ubiquinone. Couples the redox reaction to proton translocation (for every two electrons transferred, four hydrogen ions are translocated across the cytoplasmic membrane), and thus conserves the redox energy in a proton gradient. This is NADH-quinone oxidoreductase subunit C/D from Klebsiella pneumoniae (strain 342).